The following is a 126-amino-acid chain: Aspartate 1-decarboxylase (126 aa).

The active-site Schiff-base intermediate with substrate; via pyruvic acid is the serine 25. Pyruvic acid (Ser) is present on serine 25. A substrate-binding site is contributed by threonine 57. The active-site Proton donor is tyrosine 58. 73–75 (GAA) is a binding site for substrate.

This sequence belongs to the PanD family. In terms of assembly, heterooctamer of four alpha and four beta subunits. Requires pyruvate as cofactor. Post-translationally, is synthesized initially as an inactive proenzyme, which is activated by self-cleavage at a specific serine bond to produce a beta-subunit with a hydroxyl group at its C-terminus and an alpha-subunit with a pyruvoyl group at its N-terminus.

It localises to the cytoplasm. The catalysed reaction is L-aspartate + H(+) = beta-alanine + CO2. It functions in the pathway cofactor biosynthesis; (R)-pantothenate biosynthesis; beta-alanine from L-aspartate: step 1/1. Catalyzes the pyruvoyl-dependent decarboxylation of aspartate to produce beta-alanine. The sequence is that of Aspartate 1-decarboxylase from Alkalilimnicola ehrlichii (strain ATCC BAA-1101 / DSM 17681 / MLHE-1).